A 92-amino-acid polypeptide reads, in one-letter code: Transcription factor S4 (92 aa).

A ZR-N region spans residues 1 to 31 (MRFCPKCGSFLKVKGNKMVCSKCGYSDHDVE). The Zn(2+) site is built by C4, C7, C20, and C23. Residues 32–56 (KVILKENVAHENDKTIIADGETIEG) are flexible linker. The interval 55 to 92 (EGRVAISLCPRCGSVRAILLNKKKRLYRCMTCNFVYNI) is ZR-C. Residues C63 and C66 each contribute to the Zn(2+) site. Residues K76, K77, and K78 contribute to the active site. Zn(2+) contacts are provided by C83 and C86.

The protein belongs to the archaeal RpoM/eukaryotic RPA12/RPB9/RPC11 RNA polymerase family. In terms of assembly, interacts with RNA polymerase. It depends on Zn(2+) as a cofactor.

In terms of biological role, a potent inhibitor of RNA polymerase (RNAP) probably involved in viral defense. Destabilizes the transcription pre-initiation complex of TBP, TFB, DNA and RNAP, inhibits abortive transcription initiation, productive initiation and transcription elongation. Increases the RNAP KM for NTPs about 50-fold. Overexpression of TFS1-tip4 (TFS1 with the active tip of this protein, phenocopies this protein) in S.acidocaldarius MW001 leads to severe growth inhibition. When bound to RNAP induces conformational changes that widen the DNA-binding channel, probably destabilizing the interaction of DNA with RNAP. This Saccharolobus solfataricus (strain ATCC 35092 / DSM 1617 / JCM 11322 / P2) (Sulfolobus solfataricus) protein is Transcription factor S4.